We begin with the raw amino-acid sequence, 227 residues long: Protein FAM3C (227 aa).

Residues 1 to 30 form the signal peptide; it reads MMRAGGLLKLGVLVSVLFVAVFLAFELLES. Cystine bridges form between C58–C86 and C64–C221. Residues 67 to 225 form the GG-type lectin domain; it reads DHFAFKITSG…LEMEGCIPIK (159 aa).

It belongs to the FAM3 family.

The protein resides in the secreted. In terms of biological role, involved in retinal laminar formation. In Danio rerio (Zebrafish), this protein is Protein FAM3C (fam3c).